Consider the following 124-residue polypeptide: MTNVLLVALGGSIGAVFRYLISIFMIQVFGSSFPFGTLVVNVIGSFFMGVIYALGQMSHISPELKALIGVGLLGALTTFSTFSNETLLLLQEGDWLKAILNVVLNLSLCLFMVYLGQQLVFSRI.

Transmembrane regions (helical) follow at residues 4-24, 35-55, 60-80, and 95-115; these read VLLV…ISIF, FGTL…YALG, ISPE…TTFS, and WLKA…MVYL. Glycine 74 and threonine 77 together coordinate Na(+).

It belongs to the fluoride channel Fluc/FEX (TC 1.A.43) family.

It localises to the cell inner membrane. It carries out the reaction fluoride(in) = fluoride(out). Its activity is regulated as follows. Na(+) is not transported, but it plays an essential structural role and its presence is essential for fluoride channel function. Fluoride-specific ion channel. Important for reducing fluoride concentration in the cell, thus reducing its toxicity. The sequence is that of Fluoride-specific ion channel FluC from Shewanella putrefaciens (strain CN-32 / ATCC BAA-453).